Here is a 465-residue protein sequence, read N- to C-terminus: Phosphomethylpyrimidine synthase (465 aa).

Substrate is bound by residues asparagine 80, methionine 109, tyrosine 139, histidine 175, serine 195–glycine 197, aspartate 236–arginine 239, and glutamate 275. Histidine 279 lines the Zn(2+) pocket. Substrate is bound at residue tyrosine 302. Histidine 343 serves as a coordination point for Zn(2+). [4Fe-4S] cluster contacts are provided by cysteine 423, cysteine 426, and cysteine 431.

The protein belongs to the ThiC family. The cofactor is [4Fe-4S] cluster.

It carries out the reaction 5-amino-1-(5-phospho-beta-D-ribosyl)imidazole + S-adenosyl-L-methionine = 4-amino-2-methyl-5-(phosphooxymethyl)pyrimidine + CO + 5'-deoxyadenosine + formate + L-methionine + 3 H(+). The protein operates within cofactor biosynthesis; thiamine diphosphate biosynthesis. Catalyzes the synthesis of the hydroxymethylpyrimidine phosphate (HMP-P) moiety of thiamine from aminoimidazole ribotide (AIR) in a radical S-adenosyl-L-methionine (SAM)-dependent reaction. In Synechococcus sp. (strain CC9311), this protein is Phosphomethylpyrimidine synthase.